Reading from the N-terminus, the 734-residue chain is MATKFPKFSQDLAQDPTTRRIWYGIATAHDFESHDGMTEENLYQKIFASHFGHLAIIFLWVSGNLFHVAWQGNFEQWSQDPLHVRPIAHAIWDPHFGQGAIDAFTQAGASSPVNVAYSGVYHWWYTIGMRTNGDLYQGSIFLLILSALFLFAGWLHLQPKFRPSLSWFKNAESRLNHHLAGLFGFSSLAWTGHLVHVAIPEARGQHVGWDNFLSTLPHPAGLAPFFTGNWSVYAENPDTASHAFGTAEGAGTAILTFLGGFHPQTEALWLTDIAHHHLAIAVIFIIAGHMYRTNFGIGHSIKEILEAHKPPAGGLGAGHKGLYETLNNSLHFQLALALASLGVVTSLVAQHMYSMPPYAFIAKDYTTMAALYTHHQYIATFIMCGAFAHGAIFLIRDYDPEANKNNVLARVLEHKEAIISHLSWVSLFLGFHTLGLYVHNDVVVAFGTPEKQILIEPVFAQFVQAASGKALYGFNVLLANADSAATAASLGTYLPNWLDAINSGKTALFLPIGPGDFLVHHAIALGLHTTTLILVKGALDARGSKLMPDKKDFGYSFPCDGPGRGGTCDISAWDAFYLAVFWALNTVGWVTFYWHWKNLTVWQGNVAQFNESSTYLMGWLRDYLWLNSSQLINGYNPFGTNNLSVWSWMFLFGHLIWATGFMFLISWRGYWQELIETIVWAHQRTPLANIVGWKDKPVALSIVQARVVGLAHFTVGYFLTYAAFLIASTAGKFG.

The next 8 helical transmembrane spans lie at 46–69 (IFAS…FHVA), 135–158 (LYQG…LHLQ), 175–199 (LNHH…HVAI), 273–291 (IAHH…GHMY), 330–353 (LHFQ…QHMY), 369–395 (AALY…IFLI), 417–439 (AIIS…LYVH), and 517–535 (FLVH…LILV). 2 residues coordinate [4Fe-4S] cluster: Cys-559 and Cys-568. 2 helical membrane passes run 575–596 (AFYL…YWHW) and 643–665 (LSVW…MFLI). Positions 654, 662, and 670 each coordinate chlorophyll a. Trp-671 contributes to the phylloquinone binding site. Residues 707–727 (VVGLAHFTVGYFLTYAAFLIA) traverse the membrane as a helical segment.

It belongs to the PsaA/PsaB family. The PsaA/B heterodimer binds the P700 chlorophyll special pair and subsequent electron acceptors. PSI consists of a core antenna complex that captures photons, and an electron transfer chain that converts photonic excitation into a charge separation. The cyanobacterial PSI reaction center is composed of one copy each of PsaA,B,C,D,E,F,I,J,K,L,M and X, and forms trimeric complexes. The cofactor is PSI electron transfer chain: 5 chlorophyll a, 1 chlorophyll a', 2 phylloquinones and 3 4Fe-4S clusters. PSI core antenna: 90 chlorophyll a, 22 carotenoids, 3 phospholipids and 1 galactolipid. P700 is a chlorophyll a/chlorophyll a' dimer, A0 is one or more chlorophyll a, A1 is one or both phylloquinones and FX is a shared 4Fe-4S iron-sulfur center..

It is found in the cellular thylakoid membrane. It catalyses the reaction reduced [plastocyanin] + hnu + oxidized [2Fe-2S]-[ferredoxin] = oxidized [plastocyanin] + reduced [2Fe-2S]-[ferredoxin]. In terms of biological role, psaA and PsaB bind P700, the primary electron donor of photosystem I (PSI), as well as the electron acceptors A0, A1 and FX. PSI is a plastocyanin/cytochrome c6-ferredoxin oxidoreductase, converting photonic excitation into a charge separation, which transfers an electron from the donor P700 chlorophyll pair to the spectroscopically characterized acceptors A0, A1, FX, FA and FB in turn. Oxidized P700 is reduced on the lumenal side of the thylakoid membrane by plastocyanin or cytochrome c6. This chain is Photosystem I P700 chlorophyll a apoprotein A2, found in Synechococcus elongatus (strain ATCC 33912 / PCC 7942 / FACHB-805) (Anacystis nidulans R2).